A 171-amino-acid chain; its full sequence is Glycine cleavage system H protein 4 (171 aa).

The Lipoyl-binding domain occupies 30–112 (FAEVGITDYA…YEAGWIAVIE (83 aa)). Residue K71 is modified to N6-lipoyllysine. A disordered region spans residues 139 to 171 (EKEEEVEVKEEELIETESIEELSEEELGYEENK).

The protein belongs to the GcvH family. As to quaternary structure, the glycine cleavage system is composed of four proteins: P, T, L and H. It depends on (R)-lipoate as a cofactor.

Its function is as follows. The glycine cleavage system catalyzes the degradation of glycine. The H protein shuttles the methylamine group of glycine from the P protein to the T protein. In Aquifex aeolicus (strain VF5), this protein is Glycine cleavage system H protein 4.